A 333-amino-acid chain; its full sequence is MKKIGYLGLGAWGYCLASLLASKGHKVVCWTTKPELAKHLTDTREHPLLAGHLSKGEMTFTTDMSEALKDVDMIVESVTSAGLRSVFEQVRSLGLPNCPIVITSKGIEQDTGMILPEVVIEVLGEEFRSLIGFLSGPSFAQEVIRELPTSVVGTGYTVEVIQEICETFMTPTFRVYPNTDILGVAFGGALKNIIGIACGISDGLALGCSSKAALMTRGLHEIRKLSVACGCKAETLNGLAGMGDLCVTCSSPISRNFRFGTLLAQGLSTEQARNRIGMVVEGAYTCVSALQLSKQHKIIMPISEAVYNIIQGTIKPIEAVSALMKRTIKEEHL.

Positions 12, 33, and 105 each coordinate NADPH. Sn-glycerol 3-phosphate is bound by residues Lys-105, Gly-136, and Ser-138. Ala-140 is a binding site for NADPH. The sn-glycerol 3-phosphate site is built by Lys-191, Asp-244, Ser-254, Arg-255, and Asn-256. The active-site Proton acceptor is Lys-191. An NADPH-binding site is contributed by Arg-255. Val-279 and Glu-281 together coordinate NADPH.

Belongs to the NAD-dependent glycerol-3-phosphate dehydrogenase family.

It is found in the cytoplasm. The enzyme catalyses sn-glycerol 3-phosphate + NAD(+) = dihydroxyacetone phosphate + NADH + H(+). It catalyses the reaction sn-glycerol 3-phosphate + NADP(+) = dihydroxyacetone phosphate + NADPH + H(+). It participates in membrane lipid metabolism; glycerophospholipid metabolism. Its function is as follows. Catalyzes the reduction of the glycolytic intermediate dihydroxyacetone phosphate (DHAP) to sn-glycerol 3-phosphate (G3P), the key precursor for phospholipid synthesis. The sequence is that of Glycerol-3-phosphate dehydrogenase [NAD(P)+] from Protochlamydia amoebophila (strain UWE25).